Reading from the N-terminus, the 129-residue chain is NADH-quinone oxidoreductase subunit A (129 aa).

The next 3 helical transmembrane spans lie at 14–34 (LAIHVALSAGIVAAIIVVAAW), 67–87 (FLIAALFVIFDMEAAILFAWA), and 95–115 (WLGLIEAAVFIGVLLLALVYL).

The protein belongs to the complex I subunit 3 family. In terms of assembly, NDH-1 is composed of 14 different subunits. Subunits NuoA, H, J, K, L, M, N constitute the membrane sector of the complex.

It localises to the cell inner membrane. It carries out the reaction a quinone + NADH + 5 H(+)(in) = a quinol + NAD(+) + 4 H(+)(out). Functionally, NDH-1 shuttles electrons from NADH, via FMN and iron-sulfur (Fe-S) centers, to quinones in the respiratory chain. The immediate electron acceptor for the enzyme in this species is believed to be ubiquinone. Couples the redox reaction to proton translocation (for every two electrons transferred, four hydrogen ions are translocated across the cytoplasmic membrane), and thus conserves the redox energy in a proton gradient. The polypeptide is NADH-quinone oxidoreductase subunit A (Rhodopseudomonas palustris (strain BisB5)).